The primary structure comprises 323 residues: tRNA U34 carboxymethyltransferase (323 aa).

Carboxy-S-adenosyl-L-methionine contacts are provided by residues lysine 91, tryptophan 105, lysine 110, glycine 130, 152–154 (DPT), 181–182 (IE), methionine 196, tyrosine 200, and arginine 315.

The protein belongs to the class I-like SAM-binding methyltransferase superfamily. CmoB family. Homotetramer.

It carries out the reaction carboxy-S-adenosyl-L-methionine + 5-hydroxyuridine(34) in tRNA = 5-carboxymethoxyuridine(34) in tRNA + S-adenosyl-L-homocysteine + H(+). Functionally, catalyzes carboxymethyl transfer from carboxy-S-adenosyl-L-methionine (Cx-SAM) to 5-hydroxyuridine (ho5U) to form 5-carboxymethoxyuridine (cmo5U) at position 34 in tRNAs. The protein is tRNA U34 carboxymethyltransferase of Escherichia coli O81 (strain ED1a).